A 90-amino-acid chain; its full sequence is Mu-theraphotoxin-Phlo1b (90 aa).

Positions 1-22 are cleaved as a signal peptide; sequence MKVSVLITLAVLGVMFVWTSAA. The propeptide occupies 23-50; sequence EQEDHGSDRRDSPALLKSLGRVFQSEER. 3 disulfide bridges follow: C52-C66, C59-C71, and C65-C79. Residue F85 is modified to Phenylalanine amide. The propeptide occupies 86-90; that stretch reads GNEKS.

This sequence belongs to the neurotoxin 10 (Hwtx-1) family. 39 (Jztx-34) subfamily. Expressed by the venom gland.

Its subcellular location is the secreted. In terms of biological role, gating-modifier toxin that inhibits voltage-gated sodium channel Nav by shifting the threshold for channel activation to more positive potentials. This toxin moderately inhibits human Nav1.7/SCN9A (IC(50)=360 nM) and weakly inhibits hNav1.2/SCN2A (37% inhibition at 1 uM peptide) and hNav1.5/SCN5A (&lt;20% inhibition at 1 uM peptide). Inhibition of Nav1.7 is voltage-dependent, with lower inhibition at more positive test pulses. The protein is Mu-theraphotoxin-Phlo1b of Phlogius sp. (Tarantula spider).